Here is a 490-residue protein sequence, read N- to C-terminus: Interferon-induced protein with tetratricopeptide repeats 3 (490 aa).

TPR repeat units lie at residues 51 to 84 (ATMYNLLAYIKHLDGNNEAALECLRQAEELIQQE), 94 to 127 (LVTWGNYAWVYYHLGRLSDAQIYVDKVKQTCKKF), 136 to 169 (SELDCEEGWTQLKCGRNERAKVCFEKALEEKPNN), 172 to 206 (FSSGLAIAMYHLDNHPEKQFSTDVLKQAIELSPDN), 207 to 240 (QYVKVLLGLKLQKMNKEAEGEQFVEEALEKSPCQ), 241 to 274 (TDVLRSAAKFYRRKGDLDKAIELFQRVLESTPNN), 415 to 448 (PNYWYLQGLIHKQNGDLLQAAKCYEKELGRLLRD), and 450 to 481 (PSGIGSIFLSASELEDGSEEMGQGAVSSSPRE). S203 and S237 each carry phosphoserine. The disordered stretch occupies residues 467 to 490 (SEEMGQGAVSSSPRELLSNSEQLN). The segment covering 474 to 490 (AVSSSPRELLSNSEQLN) has biased composition (polar residues). A Phosphoserine modification is found at S478.

This sequence belongs to the IFIT family. As to quaternary structure, component of an interferon-dependent multiprotein complex, at least composed of IFIT1, IFIT2 and IFIT3. Interacts with IFIT1 and IFIT2. Interacts (via N-terminus) with MAVS, TBK1, TRAF6 and RIGI. Interacts with COPS5. Expression significantly higher in peripheral blood mononuclear cells (PBMCs) and monocytes from systemic lupus erythematosus (SLE) patients than in those from healthy individuals (at protein level). Spleen, lung, leukocytes, lymph nodes, placenta, bone marrow and fetal liver.

Its subcellular location is the cytoplasm. It localises to the mitochondrion. Functionally, IFN-induced antiviral protein which acts as an inhibitor of cellular as well as viral processes, cell migration, proliferation, signaling, and viral replication. Enhances MAVS-mediated host antiviral responses by serving as an adapter bridging TBK1 to MAVS which leads to the activation of TBK1 and phosphorylation of IRF3 and phosphorylated IRF3 translocates into nucleus to promote antiviral gene transcription. Exhibits an antiproliferative activity via the up-regulation of cell cycle negative regulators CDKN1A/p21 and CDKN1B/p27. Normally, CDKN1B/p27 turnover is regulated by COPS5, which binds CDKN1B/p27 in the nucleus and exports it to the cytoplasm for ubiquitin-dependent degradation. IFIT3 sequesters COPS5 in the cytoplasm, thereby increasing nuclear CDKN1B/p27 protein levels. Up-regulates CDKN1A/p21 by down-regulating MYC, a repressor of CDKN1A/p21. Can negatively regulate the apoptotic effects of IFIT2. The protein is Interferon-induced protein with tetratricopeptide repeats 3 (IFIT3) of Homo sapiens (Human).